Consider the following 456-residue polypeptide: Riboflavin transporter RibZ (456 aa).

The next 14 helical transmembrane spans lie at 5 to 25, 45 to 65, 78 to 98, 105 to 125, 134 to 154, 158 to 178, 192 to 212, 220 to 240, 260 to 280, 289 to 309, 321 to 341, 343 to 363, 385 to 405, and 428 to 448; these read WIVLIIICIGVFMSTLDGSIL, WVVTAYMLVVTATMLFFGKLG, FFIFTIGSFLCSMSNNLSTLI, AVGASILMATGLGIVSNAFPA, ITGAVVGIGNMSGPVIGGIIL, GWPSIFIINIPIGIIAVFLGI, SFDIPGLLLFASCTTLILLAM, LYLGITALIIFLLLALREVKF, IIGVACYFPQMAVSFLLPFYL, MMAGYVMTVHPLIMVLIAPIA, ILTASFSFMTISLVGMALLKA, SPLYLLIVCLVIFGLGLGAFS, FLATIRNLSFALGTAFFSSFF, and QSYWIAASVCFIGLILTVFFM.

The protein belongs to the major facilitator superfamily.

The protein localises to the cell membrane. Its function is as follows. Transports riboflavin into the cell. The sequence is that of Riboflavin transporter RibZ from Clostridioides difficile (strain 630) (Peptoclostridium difficile).